The sequence spans 138 residues: Large ribosomal subunit protein uL16 (138 aa).

Residues 1 to 13 (MLQPKRRKYRKEQ) show a composition bias toward basic residues. Residues 1 to 24 (MLQPKRRKYRKEQKGRNTGKATRG) form a disordered region.

The protein belongs to the universal ribosomal protein uL16 family. In terms of assembly, part of the 50S ribosomal subunit.

Binds 23S rRNA and is also seen to make contacts with the A and possibly P site tRNAs. This Cupriavidus necator (strain ATCC 17699 / DSM 428 / KCTC 22496 / NCIMB 10442 / H16 / Stanier 337) (Ralstonia eutropha) protein is Large ribosomal subunit protein uL16.